The primary structure comprises 181 residues: Ribose 1,5-bisphosphate phosphokinase PhnN (181 aa).

12-19 contributes to the ATP binding site; that stretch reads GPSGAGKD.

Belongs to the ribose 1,5-bisphosphokinase family.

The enzyme catalyses alpha-D-ribose 1,5-bisphosphate + ATP = 5-phospho-alpha-D-ribose 1-diphosphate + ADP. It participates in metabolic intermediate biosynthesis; 5-phospho-alpha-D-ribose 1-diphosphate biosynthesis; 5-phospho-alpha-D-ribose 1-diphosphate from D-ribose 5-phosphate (route II): step 3/3. Catalyzes the phosphorylation of ribose 1,5-bisphosphate to 5-phospho-D-ribosyl alpha-1-diphosphate (PRPP). The chain is Ribose 1,5-bisphosphate phosphokinase PhnN from Acidiphilium cryptum (strain JF-5).